The sequence spans 2055 residues: Citron Rho-interacting kinase (2055 aa).

Met1 carries the N-acetylmethionine modification. One can recognise a Protein kinase domain in the interval Phe97–Phe359. Residues Val103–Val111 and Lys126 each bind ATP. Catalysis depends on Asp221, which acts as the Proton acceptor. The AGC-kinase C-terminal domain maps to Ala360–Ser430. Phosphoserine occurs at positions 432, 439, 479, and 581. Coiled coils occupy residues Ala441–Ala1086, Leu1091–Ser1247, and Ala1275–Thr1325. The tract at residues Leu1132–Pro1328 is interaction with Rho/Rac. Tyr1237 is modified (phosphotyrosine). Positions Arg1316–His1329 are enriched in basic and acidic residues. Disordered stretches follow at residues Arg1316 to Ala1336 and Ser1348 to Arg1377. Over residues Pro1353–Ser1363 the composition is skewed to low complexity. Residues Arg1365 to Arg1377 are compositionally biased toward basic and acidic residues. The Phorbol-ester/DAG-type zinc finger occupies Pro1388–Cys1437. The 121-residue stretch at Ser1469–Ala1589 folds into the PH domain. One can recognise a CNH domain in the interval Arg1617–Gly1907. At Lys1747 the chain carries N6-acetyllysine. The interval Ser1932 to Arg2040 is disordered. Positions Val1939 to Asn1948 are enriched in polar residues. Phosphoserine is present on Ser1966. Residues Ser1974–Arg2031 show a composition bias toward basic and acidic residues. Residues Pro1979 to Arg1984 carry the SH3-binding motif. The residue at position 2021 (Ser2021) is a Phosphoserine. Thr2041 is subject to Phosphothreonine.

This sequence belongs to the protein kinase superfamily. AGC Ser/Thr protein kinase family. As to quaternary structure, interacts with TTC3. Homodimer. Directly interacts with KIF14 depending on the activation state (stronger interaction with the kinase-dead form). In terms of tissue distribution, a major signal was observed in testis and brain, but it was also detected in thymus, spleen, kidney, heart and lung.

The protein resides in the cytoplasm. It catalyses the reaction L-seryl-[protein] + ATP = O-phospho-L-seryl-[protein] + ADP + H(+). It carries out the reaction L-threonyl-[protein] + ATP = O-phospho-L-threonyl-[protein] + ADP + H(+). Plays a role in cytokinesis. Required for KIF14 localization to the central spindle and midbody. Probable RHO/RAC effector that binds to the GTP-bound forms of RHO and RAC1. It probably binds p21 with a tighter specificity in vivo. Displays serine/threonine protein kinase activity. Plays an important role in the regulation of cytokinesis and the development of the central nervous system. Phosphorylates MYL9/MLC2. In Mus musculus (Mouse), this protein is Citron Rho-interacting kinase (Cit).